Consider the following 81-residue polypeptide: Cytotoxin 4 (81 aa).

The signal sequence occupies residues 1 to 21 (MKTLLLTLVVVTIVCLDLGYT). Disulfide bonds link Cys24–Cys42, Cys35–Cys59, Cys63–Cys74, and Cys75–Cys80.

The protein belongs to the three-finger toxin family. Short-chain subfamily. Type IA cytotoxin sub-subfamily. In terms of assembly, monomer in solution; Homodimer and oligomer in the presence of negatively charged lipids forming a pore with a size ranging between 20 and 30 Angstroms. Expressed by the venom gland.

The protein localises to the secreted. It is found in the target cell membrane. Basic protein that bind to cell membrane and depolarizes cardiomyocytes. This cytotoxin also shows lytic activities, but 2-fold more important than that of CTX-A2. It binds to the integrin alpha-V/beta-3 with a moderate affinity. Inhibits protein kinase C. It may interact with sulfatides in the cell membrane, which induces pore formation and cell internalization and is responsible for cytotoxicity in cardiomyocytes. It may also target the mitochondrial membrane and induces mitochondrial swelling and fragmentation. This Naja atra (Chinese cobra) protein is Cytotoxin 4.